Reading from the N-terminus, the 115-residue chain is Large ribosomal subunit protein bL20 (115 aa).

Belongs to the bacterial ribosomal protein bL20 family.

Functionally, binds directly to 23S ribosomal RNA and is necessary for the in vitro assembly process of the 50S ribosomal subunit. It is not involved in the protein synthesizing functions of that subunit. This Prochlorococcus marinus (strain MIT 9515) protein is Large ribosomal subunit protein bL20.